The sequence spans 260 residues: DNA repair protein RecO (260 aa).

The protein belongs to the RecO family.

In terms of biological role, involved in DNA repair and RecF pathway recombination. This is DNA repair protein RecO from Ligilactobacillus salivarius (strain UCC118) (Lactobacillus salivarius).